Consider the following 562-residue polypeptide: NAD-dependent malic enzyme (562 aa).

Catalysis depends on Tyr101, which acts as the Proton donor. NAD(+) is bound at residue Arg154. Catalysis depends on Lys172, which acts as the Proton acceptor. A divalent metal cation is bound by residues Glu243, Asp244, and Asp267. NAD(+) is bound by residues Asp267 and Asn415.

This sequence belongs to the malic enzymes family. In terms of assembly, homotetramer. It depends on Mg(2+) as a cofactor. Mn(2+) is required as a cofactor.

It carries out the reaction (S)-malate + NAD(+) = pyruvate + CO2 + NADH. The enzyme catalyses oxaloacetate + H(+) = pyruvate + CO2. This Idiomarina loihiensis (strain ATCC BAA-735 / DSM 15497 / L2-TR) protein is NAD-dependent malic enzyme.